The primary structure comprises 423 residues: Mannitol-1-phosphate 5-dehydrogenase (423 aa).

Positions 40, 69, and 70 each coordinate Zn(2+).

Belongs to the zinc-containing alcohol dehydrogenase family. Requires Zn(2+) as cofactor.

It catalyses the reaction D-mannitol 1-phosphate + NAD(+) = beta-D-fructose 6-phosphate + NADH + H(+). Seems to be involved in mannitol utilization. Complements an E.coli mtlD deletion mutant. This chain is Mannitol-1-phosphate 5-dehydrogenase, found in Aliivibrio fischeri (strain ATCC 700601 / ES114) (Vibrio fischeri).